The sequence spans 170 residues: Ribosome maturation factor RimP (170 aa).

It belongs to the RimP family.

The protein resides in the cytoplasm. Its function is as follows. Required for maturation of 30S ribosomal subunits. This Acidothermus cellulolyticus (strain ATCC 43068 / DSM 8971 / 11B) protein is Ribosome maturation factor RimP.